The following is a 240-amino-acid chain: Uridylate kinase (240 aa).

13 to 16 contributes to the ATP binding site; the sequence is KLSG. The tract at residues 21–26 is involved in allosteric activation by GTP; the sequence is GEQGYG. Residue Gly55 coordinates UMP. Gly56 and Arg60 together coordinate ATP. UMP contacts are provided by residues Asp75 and 137–144; that span reads TGNPFFST. Positions 164, 170, and 173 each coordinate ATP.

Belongs to the UMP kinase family. In terms of assembly, homohexamer.

It is found in the cytoplasm. It carries out the reaction UMP + ATP = UDP + ADP. It functions in the pathway pyrimidine metabolism; CTP biosynthesis via de novo pathway; UDP from UMP (UMPK route): step 1/1. With respect to regulation, allosterically activated by GTP. Inhibited by UTP. Catalyzes the reversible phosphorylation of UMP to UDP. This is Uridylate kinase from Aquifex aeolicus (strain VF5).